Here is a 560-residue protein sequence, read N- to C-terminus: Dihydroxy-acid dehydratase (560 aa).

Aspartate 80 serves as a coordination point for Mg(2+). Residue cysteine 121 coordinates [2Fe-2S] cluster. Mg(2+) is bound by residues aspartate 122 and lysine 123. Lysine 123 bears the N6-carboxylysine mark. Residue cysteine 194 participates in [2Fe-2S] cluster binding. Glutamate 447 contacts Mg(2+). Serine 473 functions as the Proton acceptor in the catalytic mechanism.

It belongs to the IlvD/Edd family. In terms of assembly, homodimer. [2Fe-2S] cluster is required as a cofactor. Requires Mg(2+) as cofactor.

It carries out the reaction (2R)-2,3-dihydroxy-3-methylbutanoate = 3-methyl-2-oxobutanoate + H2O. The enzyme catalyses (2R,3R)-2,3-dihydroxy-3-methylpentanoate = (S)-3-methyl-2-oxopentanoate + H2O. It participates in amino-acid biosynthesis; L-isoleucine biosynthesis; L-isoleucine from 2-oxobutanoate: step 3/4. The protein operates within amino-acid biosynthesis; L-valine biosynthesis; L-valine from pyruvate: step 3/4. Functionally, functions in the biosynthesis of branched-chain amino acids. Catalyzes the dehydration of (2R,3R)-2,3-dihydroxy-3-methylpentanoate (2,3-dihydroxy-3-methylvalerate) into 2-oxo-3-methylpentanoate (2-oxo-3-methylvalerate) and of (2R)-2,3-dihydroxy-3-methylbutanoate (2,3-dihydroxyisovalerate) into 2-oxo-3-methylbutanoate (2-oxoisovalerate), the penultimate precursor to L-isoleucine and L-valine, respectively. The polypeptide is Dihydroxy-acid dehydratase (Chloroherpeton thalassium (strain ATCC 35110 / GB-78)).